The chain runs to 478 residues: UDP-N-acetylmuramate--L-alanine ligase (478 aa).

Residue G112–T118 participates in ATP binding.

It belongs to the MurCDEF family.

The protein localises to the cytoplasm. It carries out the reaction UDP-N-acetyl-alpha-D-muramate + L-alanine + ATP = UDP-N-acetyl-alpha-D-muramoyl-L-alanine + ADP + phosphate + H(+). The protein operates within cell wall biogenesis; peptidoglycan biosynthesis. Functionally, cell wall formation. This Polynucleobacter asymbioticus (strain DSM 18221 / CIP 109841 / QLW-P1DMWA-1) (Polynucleobacter necessarius subsp. asymbioticus) protein is UDP-N-acetylmuramate--L-alanine ligase.